The following is a 491-amino-acid chain: Synaptotagmin-9 (491 aa).

Over 1 to 52 the chain is Vesicular; that stretch reads MPGARDALCHQALQLLAELCARGALEHDSCQDFIYHLRDRARPRLRDPDISV. Residues 9-31 are cysteine motif; sequence CHQALQLLAELCARGALEHDSCQ. A helical transmembrane segment spans residues 53 to 73; the sequence is SLLTLVVTACGLALFGVSLFV. At 74–491 the chain is on the cytoplasmic side; that stretch reads SWKLCWVPWR…AHWHSLLEKR (418 aa). Over residues 91-104 the composition is skewed to polar residues; it reads SKDNNQEPLNYTDT. A disordered region spans residues 91-147; it reads SKDNNQEPLNYTDTETNEQENSEDFLDPPTPCPDSSMKISHTSPDIPLSTQPGGQDN. Residues 105-116 are compositionally biased toward acidic residues; sequence ETNEQENSEDFL. Residues 127 to 144 are compositionally biased toward polar residues; it reads MKISHTSPDIPLSTQPGG. Ser-177 is subject to Phosphoserine. C2 domains follow at residues 220 to 341 and 352 to 485; these read ACGK…ILWK and DLGE…AHWH. Ca(2+)-binding residues include Asp-251, Asp-257, Asp-309, Phe-310, Asp-311, Ser-314, Asp-317, Asp-383, Asp-389, Asp-443, and Asp-445.

The protein belongs to the synaptotagmin family. Homodimer; disulfide-linked via the cysteine motif. Can also form heterodimers with SYT3, SYT6, SYT7 and SYT10. Ca(2+) is required as a cofactor.

The protein localises to the cytoplasmic vesicle. Its subcellular location is the secretory vesicle. It localises to the synaptic vesicle membrane. Functionally, may be involved in Ca(2+)-dependent exocytosis of secretory vesicles through Ca(2+) and phospholipid binding to the C2 domain or may serve as Ca(2+) sensors in the process of vesicular trafficking and exocytosis. The sequence is that of Synaptotagmin-9 (Syt9) from Rattus norvegicus (Rat).